A 416-amino-acid polypeptide reads, in one-letter code: Orexin/Hypocretin receptor type 1 (416 aa).

The disordered stretch occupies residues 1–22 (MEPSATPGAQPGVPTSSGEPFH). Topologically, residues 1–46 (MEPSATPGAQPGVPTSSGEPFHLPPDYEDEFLRYLWRDYLYPKQYE) are extracellular. A required for response to orexin-A region spans residues 26 to 41 (DYEDEFLRYLWRDYLY). The chain crosses the membrane as a helical span at residues 47-67 (WVLIAAYVAVFLIALVGNTLV). Residues 68-82 (CLAVWRNHHMRTVTN) lie on the Cytoplasmic side of the membrane. The chain crosses the membrane as a helical span at residues 83 to 105 (YFIVNLSLADVLVTAICLPASLL). Residues 106–119 (VDITESWLFGQALC) are Extracellular-facing. Cysteine 119 and cysteine 202 are joined by a disulfide. A helical transmembrane segment spans residues 120–140 (KVIPYLQAVSVSVAVLTLSFI). The Cytoplasmic portion of the chain corresponds to 141–160 (ALDRWYAICHPLLFKSTARR). Residues 161-182 (ARGSILGIWAVSLAVMVPQAAV) traverse the membrane as a helical segment. The Extracellular segment spans residues 183–213 (MECSSVLPELANRTRLFSVCDEHWADELYPK). Asparagine 194 is a glycosylation site (N-linked (GlcNAc...) asparagine). The helical transmembrane segment at 214–235 (IYHSCFFIVTYLAPLGLMAMAY) threads the bilayer. Topologically, residues 236–298 (FQIFRKLWGR…QMRARRKTAK (63 aa)) are cytoplasmic. A helical membrane pass occupies residues 299 to 321 (MLMVVLLVFALCYLPISVLNVLK). Over 322-336 (RVFGMFRQASDREAV) the chain is Extracellular. Residues 337–360 (YACFTFSHWLVYANSAANPIIYNF) traverse the membrane as a helical segment. Residues 361-416 (LSGKFREQFKAAFSCCLPGLGPGSSARHKSLSLQSRCSVSKVSEHVVLTTVTTVLS) are Cytoplasmic-facing.

This sequence belongs to the G-protein coupled receptor 1 family. As to expression, widely expressed.

The protein localises to the cell membrane. In terms of biological role, moderately selective excitatory receptor for orexin-A and, with a lower affinity, for orexin-B neuropeptide. Triggers an increase in cytoplasmic Ca(2+) levels in response to orexin-A binding. This Mus musculus (Mouse) protein is Orexin/Hypocretin receptor type 1.